A 240-amino-acid polypeptide reads, in one-letter code: Phosducin-like protein 2 (240 aa).

A Phosducin domain is found at 54 to 214; it reads QRDKKIDDMS…MLGQAGAVPT (161 aa). Phosphoserine occurs at positions 63 and 73. Residues 99-240 are thioredoxin fold; it reads FGSVREISGQ…DLEDKSSDFY (142 aa).

The protein belongs to the phosducin family.

Its subcellular location is the cytoplasm. Its function is as follows. Modulates the activation of caspases during apoptosis. In Drosophila melanogaster (Fruit fly), this protein is Phosducin-like protein 2.